The following is a 369-amino-acid chain: Anhydro-N-acetylmuramic acid kinase (369 aa).

Residue 12–19 (GTSMDGVD) participates in ATP binding.

The protein belongs to the anhydro-N-acetylmuramic acid kinase family.

It catalyses the reaction 1,6-anhydro-N-acetyl-beta-muramate + ATP + H2O = N-acetyl-D-muramate 6-phosphate + ADP + H(+). The protein operates within amino-sugar metabolism; 1,6-anhydro-N-acetylmuramate degradation. Its pathway is cell wall biogenesis; peptidoglycan recycling. In terms of biological role, catalyzes the specific phosphorylation of 1,6-anhydro-N-acetylmuramic acid (anhMurNAc) with the simultaneous cleavage of the 1,6-anhydro ring, generating MurNAc-6-P. Is required for the utilization of anhMurNAc either imported from the medium or derived from its own cell wall murein, and thus plays a role in cell wall recycling. In Shewanella sp. (strain ANA-3), this protein is Anhydro-N-acetylmuramic acid kinase.